A 207-amino-acid chain; its full sequence is Large ribosomal subunit protein uL4 (207 aa).

Residues 48 to 75 (THSVKNRSAVRGGGRKPWRQKGTGRARQ) are disordered. Positions 60 to 71 (GGRKPWRQKGTG) are enriched in basic residues.

This sequence belongs to the universal ribosomal protein uL4 family. Part of the 50S ribosomal subunit.

In terms of biological role, one of the primary rRNA binding proteins, this protein initially binds near the 5'-end of the 23S rRNA. It is important during the early stages of 50S assembly. It makes multiple contacts with different domains of the 23S rRNA in the assembled 50S subunit and ribosome. Its function is as follows. Forms part of the polypeptide exit tunnel. The protein is Large ribosomal subunit protein uL4 of Staphylococcus carnosus (strain TM300).